The following is a 364-amino-acid chain: UDP-N-acetylglucosamine--N-acetylmuramyl-(pentapeptide) pyrophosphoryl-undecaprenol N-acetylglucosamine transferase 1 (364 aa).

UDP-N-acetyl-alpha-D-glucosamine contacts are provided by residues 10–12, asparagine 124, serine 195, isoleucine 250, and glutamine 295; that span reads TGG.

It belongs to the glycosyltransferase 28 family. MurG subfamily.

The protein resides in the cell membrane. The enzyme catalyses di-trans,octa-cis-undecaprenyl diphospho-N-acetyl-alpha-D-muramoyl-L-alanyl-D-glutamyl-meso-2,6-diaminopimeloyl-D-alanyl-D-alanine + UDP-N-acetyl-alpha-D-glucosamine = di-trans,octa-cis-undecaprenyl diphospho-[N-acetyl-alpha-D-glucosaminyl-(1-&gt;4)]-N-acetyl-alpha-D-muramoyl-L-alanyl-D-glutamyl-meso-2,6-diaminopimeloyl-D-alanyl-D-alanine + UDP + H(+). It participates in cell wall biogenesis; peptidoglycan biosynthesis. Its function is as follows. Cell wall formation. Catalyzes the transfer of a GlcNAc subunit on undecaprenyl-pyrophosphoryl-MurNAc-pentapeptide (lipid intermediate I) to form undecaprenyl-pyrophosphoryl-MurNAc-(pentapeptide)GlcNAc (lipid intermediate II). This is UDP-N-acetylglucosamine--N-acetylmuramyl-(pentapeptide) pyrophosphoryl-undecaprenol N-acetylglucosamine transferase 1 from Bacillus anthracis.